Here is a 371-residue protein sequence, read N- to C-terminus: 3-methyl-D-ornithine--L-lysine ligase (371 aa).

K18 provides a ligand contact to ATP. L19–Q20 contacts L-lysine. ATP is bound by residues D39, N57–I58, and E80–N81. E80 serves as a coordination point for L-lysine. Residues E93–N277 enclose the ATP-grasp domain. Residues K112, K139, S146, and E168–V171 contribute to the ADP site. D-ornithine is bound by residues S177–E179 and D233. The Mg(2+) site is built by E235, E247, and D249. E247 contributes to the ADP binding site. Residues R251–T256 and E310 each bind D-ornithine. 2 residues coordinate L-lysine: S254 and E310.

The protein belongs to the PylC family. It depends on Mg(2+) as a cofactor.

The enzyme catalyses (3R)-3-methyl-D-ornithine + L-lysine + ATP = (3R)-3-methyl-D-ornithyl-N(6)-L-lysine + ADP + phosphate + H(+). It functions in the pathway amino-acid biosynthesis; L-pyrrolysine biosynthesis. Functionally, is required for the biosynthesis of pyrrolysine. Catalyzes the ATP-dependent ligation between (3R)-3-methyl-D-ornithine and L-lysine, leading to (3R)-3-methyl-D-ornithyl-N6-L-lysine. Is also involved in the synthesis of pyrroline-carboxy-lysine (Pcl), a demethylated form of pyrrolysine that is generated by the pyrrolysine biosynthetic enzymes when the growth media is supplemented with D-ornithine. This chain is 3-methyl-D-ornithine--L-lysine ligase, found in Methanosarcina mazei (strain ATCC BAA-159 / DSM 3647 / Goe1 / Go1 / JCM 11833 / OCM 88) (Methanosarcina frisia).